A 161-amino-acid chain; its full sequence is Phosphopantetheine adenylyltransferase (161 aa).

Threonine 9 is a binding site for substrate. ATP contacts are provided by residues 9–10 (TF) and histidine 17. Substrate contacts are provided by lysine 41, leucine 73, and arginine 87. Residues 88–90 (GMR), glutamate 98, and 123–129 (WSYVSST) contribute to the ATP site.

This sequence belongs to the bacterial CoaD family. Homohexamer. Requires Mg(2+) as cofactor.

It localises to the cytoplasm. The enzyme catalyses (R)-4'-phosphopantetheine + ATP + H(+) = 3'-dephospho-CoA + diphosphate. It participates in cofactor biosynthesis; coenzyme A biosynthesis; CoA from (R)-pantothenate: step 4/5. Reversibly transfers an adenylyl group from ATP to 4'-phosphopantetheine, yielding dephospho-CoA (dPCoA) and pyrophosphate. The protein is Phosphopantetheine adenylyltransferase of Actinobacillus succinogenes (strain ATCC 55618 / DSM 22257 / CCUG 43843 / 130Z).